Here is a 184-residue protein sequence, read N- to C-terminus: Ribosome-recycling factor (184 aa).

It belongs to the RRF family.

It is found in the cytoplasm. Its function is as follows. Responsible for the release of ribosomes from messenger RNA at the termination of protein biosynthesis. May increase the efficiency of translation by recycling ribosomes from one round of translation to another. This Borrelia garinii subsp. bavariensis (strain ATCC BAA-2496 / DSM 23469 / PBi) (Borreliella bavariensis) protein is Ribosome-recycling factor.